The sequence spans 109 residues: MINYFWFVLAAFCEIAGCYAFYLWLRLGKSALWVLPGLLSLTLFALLLTRVEASYAGRAYAAYGGIYVAASLFWLAFVERSRPLWSDWLGVALCVVGASVVLFGPRLSQ.

Helical transmembrane passes span 5 to 25, 27 to 47, 59 to 79, and 84 to 104; these read FWFVLAAFCEIAGCYAFYLWL, LGKSALWVLPGLLSLTLFALL, AYAAYGGIYVAASLFWLAFVE, and LWSDWLGVALCVVGASVVLFG.

Belongs to the UPF0060 family.

The protein localises to the cell inner membrane. The polypeptide is UPF0060 membrane protein PA3275 (Pseudomonas aeruginosa (strain ATCC 15692 / DSM 22644 / CIP 104116 / JCM 14847 / LMG 12228 / 1C / PRS 101 / PAO1)).